We begin with the raw amino-acid sequence, 551 residues long: PA-phosphatase related-family protein DDB_G0268928 (551 aa).

Composition is skewed to polar residues over residues 26–47 and 137–152; these read TESL…SGKD and KYNT…SSNK. 2 disordered regions span residues 26–50 and 123–172; these read TESL…DYSS and KGED…NNNN. Residues 153–171 show a composition bias toward low complexity; the sequence is TQTTVLNNSTTSSNNINNN. 7 helical membrane-spanning segments follow: residues 211–231, 232–252, 273–293, 346–366, 393–413, 474–494, and 500–520; these read SYSD…SIIY, SLLV…LVFI, LAVG…AVVL, ILQL…IYIL, MFIC…LIFP, ILPA…IATM, and YFVD…YGGF.

Belongs to the PA-phosphatase related phosphoesterase family.

The protein resides in the membrane. This Dictyostelium discoideum (Social amoeba) protein is PA-phosphatase related-family protein DDB_G0268928.